A 317-amino-acid polypeptide reads, in one-letter code: Fe-S cluster assembly protein DRE2 (317 aa).

The tract at residues 1–131 is N-terminal SAM-like domain; it reads MERMLFLSPP…KPNFGAQDTV (131 aa). The tract at residues 132-209 is linker; the sequence is PLKLGKKKKA…EEALMDEEDM (78 aa). Residues C219, C230, C233, and C235 each coordinate [2Fe-2S] cluster. A fe-S binding site A region spans residues 219 to 235; that stretch reads CRPKAGKRRRACKDCTC. The [4Fe-4S] cluster site is built by C280, C283, C291, and C294. Short sequence motifs (cx2C motif) lie at residues 280 to 283 and 291 to 294; these read CGNC and CDGC. The interval 280–294 is fe-S binding site B; sequence CGNCALGDAFRCDGC.

Belongs to the anamorsin family. As to quaternary structure, monomer. Interacts with TAH18. Interacts with MIA40. Requires [2Fe-2S] cluster as cofactor. [4Fe-4S] cluster is required as a cofactor.

The protein localises to the cytoplasm. It is found in the mitochondrion intermembrane space. Functionally, component of the cytosolic iron-sulfur (Fe-S) protein assembly (CIA) machinery required for the maturation of extramitochondrial Fe-S proteins. Part of an electron transfer chain functioning in an early step of cytosolic Fe-S biogenesis, facilitating the de novo assembly of a [4Fe-4S] cluster on the scaffold complex CFD1-NBP35. Electrons are transferred to DRE2 from NADPH via the FAD- and FMN-containing protein TAH18. TAH18-DRE2 are also required for the assembly of the diferric tyrosyl radical cofactor of ribonucleotide reductase (RNR), probably by providing electrons for reduction during radical cofactor maturation in the catalytic small subunit RNR2. The sequence is that of Fe-S cluster assembly protein DRE2 from Uncinocarpus reesii (strain UAMH 1704).